The chain runs to 181 residues: Ferritin heavy chain (181 aa).

Residues 10 to 159 enclose the Ferritin-like diiron domain; that stretch reads QNYHQDCEAA…DHVTNLRKMG (150 aa). Residues Glu-27, Glu-62, His-65, Glu-107, and Gln-141 each contribute to the Fe cation site.

Belongs to the ferritin family. As to quaternary structure, oligomer of 24 subunits. There are two types of subunits: L (light) chain and H (heavy) chain. The major chain can be light or heavy, depending on the species and tissue type. The functional molecule forms a roughly spherical shell with a diameter of 12 nm and contains a central cavity into which the insoluble mineral iron core is deposited. Expressed in erythroblasts (at protein level). Expressed in heart, liver, spleen, lung, kidney, large intestine, small intestine, muscle, glandular stomach, ovary and oviduct.

The protein resides in the cytoplasm. It is found in the lysosome. The protein localises to the cytoplasmic vesicle. It localises to the autophagosome. It carries out the reaction 4 Fe(2+) + O2 + 4 H(+) = 4 Fe(3+) + 2 H2O. Functionally, stores iron in a soluble, non-toxic, readily available form. Important for iron homeostasis. Has ferroxidase activity. Iron is taken up in the ferrous form and deposited as ferric hydroxides after oxidation. Also plays a role in delivery of iron to cells. Mediates iron uptake in capsule cells of the developing kidney. Delivery to lysosomes is mediated by the cargo receptor NCOA4 for autophagic degradation and release of iron. Inhibits translation of various mRNA species in vitro. Associates with a 35S prosome-like particle that contains non-translated mRNAs in a complex with proteins. May be involved in pre-translational regulation of some mRNA. The polypeptide is Ferritin heavy chain (Anas platyrhynchos (Mallard)).